The chain runs to 515 residues: Bifunctional purine biosynthesis protein PurH (515 aa).

One can recognise an MGS-like domain in the interval 1–145 (MTKRALISVS…KNHASVTVVV (145 aa)).

This sequence belongs to the PurH family.

The enzyme catalyses (6R)-10-formyltetrahydrofolate + 5-amino-1-(5-phospho-beta-D-ribosyl)imidazole-4-carboxamide = 5-formamido-1-(5-phospho-D-ribosyl)imidazole-4-carboxamide + (6S)-5,6,7,8-tetrahydrofolate. It catalyses the reaction IMP + H2O = 5-formamido-1-(5-phospho-D-ribosyl)imidazole-4-carboxamide. It participates in purine metabolism; IMP biosynthesis via de novo pathway; 5-formamido-1-(5-phospho-D-ribosyl)imidazole-4-carboxamide from 5-amino-1-(5-phospho-D-ribosyl)imidazole-4-carboxamide (10-formyl THF route): step 1/1. It functions in the pathway purine metabolism; IMP biosynthesis via de novo pathway; IMP from 5-formamido-1-(5-phospho-D-ribosyl)imidazole-4-carboxamide: step 1/1. This chain is Bifunctional purine biosynthesis protein PurH, found in Streptococcus suis.